The following is a 673-amino-acid chain: Armadillo repeat-containing protein 8 (673 aa).

ARM repeat units follow at residues 51 to 92 (NKQK…SLSM), 95 to 134 (ENNI…TVFI), 138 to 176 (TPVQ…HCCK), 178 to 217 (PEHQ…VLAY), 225 to 265 (TLVN…YMCR), 269 to 309 (IRTE…YLME), 313 to 352 (ELQR…HDLK), 374 to 413 (DIRK…SLSR), 416 to 455 (QQLR…NLLL), 458 to 497 (SPSK…NMAF), 501 to 540 (QKVK…NLLS), 543 to 585 (PHID…NIAD), 588 to 627 (TAKE…NLIW), and 634 to 673 (QERQ…QYLA).

As to quaternary structure, identified in the CTLH complex that contains at least MAEA, RMND5A (or alternatively its paralog RMND5B), GID8, WDR26, and RANBP9 and/or RANBP10; ARMC8 has an ancillary role in the complex.

The protein localises to the nucleus. Its subcellular location is the cytoplasm. Component of the CTLH E3 ubiquitin-protein ligase complex that mediates ubiquitination and subsequent proteasomal degradation of target proteins. The sequence is that of Armadillo repeat-containing protein 8 (armc8) from Danio rerio (Zebrafish).